Here is a 447-residue protein sequence, read N- to C-terminus: Phosphoglucosamine mutase (447 aa).

The Phosphoserine intermediate role is filled by Ser-88. The Mg(2+) site is built by Ser-88, Asp-231, Asp-233, and Asp-235. Phosphoserine is present on Ser-88.

This sequence belongs to the phosphohexose mutase family. In terms of assembly, monomer. Also forms large aggregates. Mg(2+) is required as a cofactor. Post-translationally, activated by phosphorylation. Glucose-1,6-bisphosphate or fructose-1,6-bisphosphate can activate the enzyme in vitro. However, since glucose-1,6-bisphosphate is not believed to form in methanogens, the physiologically relevant activator might be a serine kinase protein.

The enzyme catalyses alpha-D-glucosamine 1-phosphate = D-glucosamine 6-phosphate. Catalyzes the conversion of glucosamine-6-phosphate to glucosamine-1-phosphate. Also catalyzes the isomerization of glucose-1-phosphate to glucose-6-phosphate, but at a 5-fold lower rate. This is Phosphoglucosamine mutase (glmM) from Methanococcus maripaludis (strain DSM 14266 / JCM 13030 / NBRC 101832 / S2 / LL).